We begin with the raw amino-acid sequence, 576 residues long: Arginine--tRNA ligase (576 aa).

The short motif at 122-132 is the 'HIGH' region element; that stretch reads PNVAKQMHVGH.

Belongs to the class-I aminoacyl-tRNA synthetase family. Monomer.

It localises to the cytoplasm. The enzyme catalyses tRNA(Arg) + L-arginine + ATP = L-arginyl-tRNA(Arg) + AMP + diphosphate. In Yersinia enterocolitica serotype O:8 / biotype 1B (strain NCTC 13174 / 8081), this protein is Arginine--tRNA ligase.